The sequence spans 463 residues: ATP-dependent protease ATPase subunit HslU (463 aa).

Residues Val19, 61–66, Asp277, Glu341, and Arg413 contribute to the ATP site; that span reads GVGKTE.

The protein belongs to the ClpX chaperone family. HslU subfamily. As to quaternary structure, a double ring-shaped homohexamer of HslV is capped on each side by a ring-shaped HslU homohexamer. The assembly of the HslU/HslV complex is dependent on binding of ATP.

The protein localises to the cytoplasm. Its function is as follows. ATPase subunit of a proteasome-like degradation complex; this subunit has chaperone activity. The binding of ATP and its subsequent hydrolysis by HslU are essential for unfolding of protein substrates subsequently hydrolyzed by HslV. HslU recognizes the N-terminal part of its protein substrates and unfolds these before they are guided to HslV for hydrolysis. The polypeptide is ATP-dependent protease ATPase subunit HslU (Shouchella clausii (strain KSM-K16) (Alkalihalobacillus clausii)).